Here is an 823-residue protein sequence, read N- to C-terminus: Protein FAM193B (823 aa).

Disordered regions lie at residues methionine 1 to serine 78, serine 158 to aspartate 191, serine 209 to proline 281, and cysteine 381 to aspartate 409. The span at proline 26 to serine 36 shows a compositional bias: pro residues. Over residues proline 52–lysine 64 the composition is skewed to basic and acidic residues. 2 stretches are compositionally biased toward low complexity: residues serine 168 to serine 184 and serine 263 to proline 281. The segment covering glutamate 382–serine 393 has biased composition (acidic residues). Residues glycine 422–lysine 484 are a coiled coil. 2 disordered regions span residues phenylalanine 503–glycine 583 and tryptophan 599–methionine 775. 2 stretches are compositionally biased toward polar residues: residues leucine 516 to glutamate 526 and glutamine 641 to proline 657. Phosphoserine is present on residues serine 694, serine 706, and serine 813.

This sequence belongs to the FAM193 family.

The protein resides in the cytoplasm. It localises to the nucleus. The protein is Protein FAM193B (FAM193B) of Bos taurus (Bovine).